The sequence spans 62 residues: Small ribosomal subunit protein eS27 (62 aa).

Positions 17, 20, 36, and 39 each coordinate Zn(2+). A C4-type zinc finger spans residues 17–39 (CPDCENEQVVFERASTVVECTVC).

It belongs to the eukaryotic ribosomal protein eS27 family. As to quaternary structure, part of the 30S ribosomal subunit. Zn(2+) serves as cofactor.

The protein is Small ribosomal subunit protein eS27 of Methanoculleus marisnigri (strain ATCC 35101 / DSM 1498 / JR1).